A 96-amino-acid chain; its full sequence is Transmembrane protein PMIS2 (96 aa).

Helical transmembrane passes span 31–51 and 76–96; these read VMLALLAMILFLPFGILAIYF and WFNMLAIVAFVGIIYILVLVL.

Belongs to the CD225/Dispanin family. In terms of tissue distribution, specifically expressed in testis.

The protein localises to the membrane. Its function is as follows. May play a role in spermatozoa mobility. In Mus musculus (Mouse), this protein is Transmembrane protein PMIS2.